We begin with the raw amino-acid sequence, 341 residues long: Protein DOWNY MILDEW RESISTANCE 6 (341 aa).

In terms of domain architecture, Fe2OG dioxygenase spans 188-288; that stretch reads QGQHMAVNYY…RLSVASFLCP (101 aa). Residues His212, Asp214, and His269 each coordinate Fe cation. Arg279 is a 2-oxoglutarate binding site.

It belongs to the iron/ascorbate-dependent oxidoreductase family. Fe(2+) is required as a cofactor.

It carries out the reaction salicylate + NADH + O2 + H(+) = 2,3-dihydroxybenzoate + NAD(+) + H2O. Its function is as follows. Converts salicylic acid (SA) to 2,3-dihydroxybenzoic acid (2,3-DHBA). Suppressor of immunity. Regulates negatively defense associated genes expression (e.g. PR-1, PR-2, and PR-5). Negative regulator of defense against Hyaloperonospora arabidopsidis. Functionally, (Microbial infection) Required for susceptibility to the downy mildew pathogen Hyaloperonospora arabidopsidis. (Microbial infection) Required for susceptibility to Pseudomonas syringae pv. tomato DC3000. In terms of biological role, (Microbial infection) Required for susceptibility to the oomycete Phytophthora capsici. The protein is Protein DOWNY MILDEW RESISTANCE 6 of Arabidopsis thaliana (Mouse-ear cress).